The sequence spans 69 residues: Protein SlyX homolog (69 aa).

This sequence belongs to the SlyX family.

The chain is Protein SlyX homolog from Maricaulis maris (strain MCS10) (Caulobacter maris).